The sequence spans 312 residues: Deoxyribonuclease Tat-D (312 aa).

Positions 124, 161, 187, and 235 each coordinate a divalent metal cation.

This sequence belongs to the metallo-dependent hydrolases superfamily. TatD-type hydrolase family. Requires a divalent metal cation as cofactor.

It is found in the cytoplasm. The protein localises to the nucleus. In terms of biological role, has both endo- and exonuclease activities. Incises double-stranded DNA without obvious specificity via its endonuclease activity and excises the DNA from the 3'-to 5'-end by its exonuclease activity. May have a role in apoptosis. The polypeptide is Deoxyribonuclease Tat-D (Schizosaccharomyces pombe (strain 972 / ATCC 24843) (Fission yeast)).